A 109-amino-acid chain; its full sequence is Phosphoribosyl-ATP pyrophosphatase (109 aa).

Belongs to the PRA-PH family.

The protein resides in the cytoplasm. The enzyme catalyses 1-(5-phospho-beta-D-ribosyl)-ATP + H2O = 1-(5-phospho-beta-D-ribosyl)-5'-AMP + diphosphate + H(+). It functions in the pathway amino-acid biosynthesis; L-histidine biosynthesis; L-histidine from 5-phospho-alpha-D-ribose 1-diphosphate: step 2/9. The chain is Phosphoribosyl-ATP pyrophosphatase from Paramagnetospirillum magneticum (strain ATCC 700264 / AMB-1) (Magnetospirillum magneticum).